We begin with the raw amino-acid sequence, 150 residues long: Suppressor of HU sensitivity involved in recombination protein 1 (150 aa).

Component of the SHU complex composed of at least CSM2, PSY3, SHU1 and SHU2.

It is found in the nucleus. Plays a role in a RAD51/RAD54-dependent homologous recombination repair (HRR) pathway to repair MMS-induced lesions during S-phase. The protein is Suppressor of HU sensitivity involved in recombination protein 1 (SHU1) of Saccharomyces cerevisiae (strain ATCC 204508 / S288c) (Baker's yeast).